A 99-amino-acid polypeptide reads, in one-letter code: UPF0235 protein Cag_0319 (99 aa).

The protein belongs to the UPF0235 family.

The polypeptide is UPF0235 protein Cag_0319 (Chlorobium chlorochromatii (strain CaD3)).